The chain runs to 434 residues: Chaperone SurA (434 aa).

The first 20 residues, 1 to 20 (MKNWRTLILGLVICANTAFA), serve as a signal peptide directing secretion. PpiC domains follow at residues 171–272 (DTEL…KVND) and 282–382 (VTEV…QLVD).

Its subcellular location is the periplasm. The enzyme catalyses [protein]-peptidylproline (omega=180) = [protein]-peptidylproline (omega=0). In terms of biological role, chaperone involved in the correct folding and assembly of outer membrane proteins. Recognizes specific patterns of aromatic residues and the orientation of their side chains, which are found more frequently in integral outer membrane proteins. May act in both early periplasmic and late outer membrane-associated steps of protein maturation. The polypeptide is Chaperone SurA (Yersinia pestis bv. Antiqua (strain Antiqua)).